A 192-amino-acid polypeptide reads, in one-letter code: dCTP deaminase, dUMP-forming (192 aa).

Residues 101–106 (KSSLGR), Asp-119, 127–129 (TLE), Gln-148, Tyr-162, and Gln-174 each bind dCTP. Glu-129 serves as the catalytic Proton donor/acceptor. Positions 171–192 (YQGQRGPTPSRSWQSWHTWPTR) are disordered.

Belongs to the dCTP deaminase family. In terms of assembly, homotrimer.

It catalyses the reaction dCTP + 2 H2O = dUMP + NH4(+) + diphosphate. Its pathway is pyrimidine metabolism; dUMP biosynthesis; dUMP from dCTP: step 1/1. In terms of biological role, bifunctional enzyme that catalyzes both the deamination of dCTP to dUTP and the hydrolysis of dUTP to dUMP without releasing the toxic dUTP intermediate. The chain is dCTP deaminase, dUMP-forming from Salinispora arenicola (strain CNS-205).